Consider the following 156-residue polypeptide: Probable chemoreceptor glutamine deamidase CheD (156 aa).

The protein belongs to the CheD family.

It catalyses the reaction L-glutaminyl-[protein] + H2O = L-glutamyl-[protein] + NH4(+). Probably deamidates glutamine residues to glutamate on methyl-accepting chemotaxis receptors (MCPs), playing an important role in chemotaxis. This Sulfurimonas denitrificans (strain ATCC 33889 / DSM 1251) (Thiomicrospira denitrificans (strain ATCC 33889 / DSM 1251)) protein is Probable chemoreceptor glutamine deamidase CheD.